The sequence spans 349 residues: Myocyte-specific enhancer factor 2B (349 aa).

Residues 3–57 (RKKIQISRILDQRNRQVTFTKRKFGLMKKAYELSVLCDCDIALIIFNSAQRLFQY) enclose the MADS-box domain. Positions 58–86 (ASSDMDRVLLKYTEYSEPHESRTNADILQ) form a DNA-binding region, mef2-type. Disordered stretches follow at residues 237 to 317 (GSFA…DFPR) and 330 to 349 (AEPL…SWPR).

This sequence belongs to the MEF2 family. Heterodimer. Interacts with HDAC9. Interacts with HDAC7. In terms of tissue distribution, highest expression found in embryonic heart and skeletal muscle. Low levels found in adult spleen, lung and testis while no expression is found in adult heart, brain or skeletal muscle.

Its subcellular location is the nucleus. Its function is as follows. Transcriptional activator which binds specifically to the MEF2 element, 5'-YTA[AT](4)TAR-3', found in numerous muscle-specific genes. Activates transcription via this element. May be involved in muscle-specific and/or growth factor-related transcription. In Mus musculus (Mouse), this protein is Myocyte-specific enhancer factor 2B (Mef2b).